We begin with the raw amino-acid sequence, 235 residues long: Calcium-activated potassium channel subunit beta-2 (235 aa).

A ball and chain region spans residues 1–45; the sequence is MFIWTSGRTSSSYRHDEKRNIYQKIRDHDLLDKRKTVTALKAGED. The Cytoplasmic portion of the chain corresponds to 1–46; the sequence is MFIWTSGRTSSSYRHDEKRNIYQKIRDHDLLDKRKTVTALKAGEDR. The chain crosses the membrane as a helical span at residues 47–67; that stretch reads AILLGLAMMVCSIMMYFLLGI. Residues 68–194 are Extracellular-facing; sequence TLLRSYMQSV…VILTKLYSSN (127 aa). N-linked (GlcNAc...) asparagine glycans are attached at residues Asn88, Asn96, and Asn119. A helical membrane pass occupies residues 195 to 215; it reads VLFHSLFWPTCMMAGGVAIVA. The Cytoplasmic segment spans residues 216–235; sequence MVKLTQYLSLLCERIQRINR.

The protein belongs to the KCNMB (TC 8.A.14.1) family. KCNMB2 subfamily. Interacts with KCNMA1 tetramer. There are probably 4 molecules of KCMNB2 per KCNMA1 tetramer. Post-translationally, N-glycosylated. Expressed in kidney, heart and brain. Highly expressed in ovary. Expressed at low level in other tissues.

The protein localises to the membrane. Regulatory subunit of the calcium activated potassium KCNMA1 (maxiK) channel. Modulates the calcium sensitivity and gating kinetics of KCNMA1, thereby contributing to KCNMA1 channel diversity. Acts as a negative regulator that confers rapid and complete inactivation of KCNMA1 channel complex. May participate in KCNMA1 inactivation in chromaffin cells of the adrenal gland or in hippocampal CA1 neurons. This chain is Calcium-activated potassium channel subunit beta-2 (KCNMB2), found in Homo sapiens (Human).